A 780-amino-acid polypeptide reads, in one-letter code: Endonuclease MutS2 (780 aa).

334–341 (GPNAGGKT) serves as a coordination point for ATP. In terms of domain architecture, Smr spans 706 to 780 (IDIRGMRSVD…GGSGKTIVEI (75 aa)).

Belongs to the DNA mismatch repair MutS family. MutS2 subfamily. Homodimer. Binds to stalled ribosomes, contacting rRNA.

Functionally, endonuclease that is involved in the suppression of homologous recombination and thus may have a key role in the control of bacterial genetic diversity. Its function is as follows. Acts as a ribosome collision sensor, splitting the ribosome into its 2 subunits. Detects stalled/collided 70S ribosomes which it binds and splits by an ATP-hydrolysis driven conformational change. Acts upstream of the ribosome quality control system (RQC), a ribosome-associated complex that mediates the extraction of incompletely synthesized nascent chains from stalled ribosomes and their subsequent degradation. Probably generates substrates for RQC. The sequence is that of Endonuclease MutS2 from Borreliella burgdorferi (strain ATCC 35210 / DSM 4680 / CIP 102532 / B31) (Borrelia burgdorferi).